The primary structure comprises 149 residues: Large ribosomal subunit protein bL9 (149 aa).

The protein belongs to the bacterial ribosomal protein bL9 family.

Functionally, binds to the 23S rRNA. The sequence is that of Large ribosomal subunit protein bL9 (rplI) from Geobacillus stearothermophilus (Bacillus stearothermophilus).